A 762-amino-acid polypeptide reads, in one-letter code: Phosphoribosylformylglycinamidine synthase subunit PurL (762 aa).

The active site involves His-58. Residues Tyr-61 and Lys-105 each contribute to the ATP site. Glu-107 provides a ligand contact to Mg(2+). Residues 108 to 111 (SHNH) and Arg-130 contribute to the substrate site. His-109 acts as the Proton acceptor in catalysis. Asp-131 lines the Mg(2+) pocket. A substrate-binding site is contributed by Gln-260. Mg(2+) is bound at residue Asp-288. 332 to 334 (ESQ) contributes to the substrate binding site. Positions 520 and 557 each coordinate ATP. Asn-558 is a Mg(2+) binding site. Ser-560 serves as a coordination point for substrate.

The protein belongs to the FGAMS family. As to quaternary structure, monomer. Part of the FGAM synthase complex composed of 1 PurL, 1 PurQ and 2 PurS subunits.

Its subcellular location is the cytoplasm. The catalysed reaction is N(2)-formyl-N(1)-(5-phospho-beta-D-ribosyl)glycinamide + L-glutamine + ATP + H2O = 2-formamido-N(1)-(5-O-phospho-beta-D-ribosyl)acetamidine + L-glutamate + ADP + phosphate + H(+). Its pathway is purine metabolism; IMP biosynthesis via de novo pathway; 5-amino-1-(5-phospho-D-ribosyl)imidazole from N(2)-formyl-N(1)-(5-phospho-D-ribosyl)glycinamide: step 1/2. Part of the phosphoribosylformylglycinamidine synthase complex involved in the purines biosynthetic pathway. Catalyzes the ATP-dependent conversion of formylglycinamide ribonucleotide (FGAR) and glutamine to yield formylglycinamidine ribonucleotide (FGAM) and glutamate. The FGAM synthase complex is composed of three subunits. PurQ produces an ammonia molecule by converting glutamine to glutamate. PurL transfers the ammonia molecule to FGAR to form FGAM in an ATP-dependent manner. PurS interacts with PurQ and PurL and is thought to assist in the transfer of the ammonia molecule from PurQ to PurL. The chain is Phosphoribosylformylglycinamidine synthase subunit PurL from Rhodococcus erythropolis (strain PR4 / NBRC 100887).